The chain runs to 475 residues: tRNA-2-methylthio-N(6)-dimethylallyladenosine synthase (475 aa).

The region spanning 3–120 is the MTTase N-terminal domain; it reads KKLHIKTWGC…LPEMIDQIRA (118 aa). Residues Cys-12, Cys-49, Cys-83, Cys-157, Cys-161, and Cys-164 each coordinate [4Fe-4S] cluster. Positions 143-375 constitute a Radical SAM core domain; sequence RADGPSAFVS…QDRITQQAMR (233 aa). The TRAM domain maps to 378-441; that stretch reads RQMVGTVQRI…TNSLRGVFIR (64 aa).

The protein belongs to the methylthiotransferase family. MiaB subfamily. As to quaternary structure, monomer. It depends on [4Fe-4S] cluster as a cofactor.

The protein resides in the cytoplasm. The catalysed reaction is N(6)-dimethylallyladenosine(37) in tRNA + (sulfur carrier)-SH + AH2 + 2 S-adenosyl-L-methionine = 2-methylsulfanyl-N(6)-dimethylallyladenosine(37) in tRNA + (sulfur carrier)-H + 5'-deoxyadenosine + L-methionine + A + S-adenosyl-L-homocysteine + 2 H(+). Functionally, catalyzes the methylthiolation of N6-(dimethylallyl)adenosine (i(6)A), leading to the formation of 2-methylthio-N6-(dimethylallyl)adenosine (ms(2)i(6)A) at position 37 in tRNAs that read codons beginning with uridine. This is tRNA-2-methylthio-N(6)-dimethylallyladenosine synthase from Shewanella halifaxensis (strain HAW-EB4).